The following is a 191-amino-acid chain: MRNNKNQMYIIKIFIAIAMITGIIFLYLFYSSLTTSKLKETSNMDDSLKIKFTLIEQQGKKFDSTNLQGYLSLIYFGTTYSLYDNQALKRVEDIIKILKRENILLQVVFITLDPEHDTSEVLKKYLEKIDSNFIGLTGRVQDIEQLAQQFKVFYTSKIFDVKTNEYALQHSNFVYLISSDGKILSHYYLGS.

This sequence belongs to the SCO1/2 family.

The polypeptide is SCO2-like protein RP031 (Rickettsia prowazekii (strain Madrid E)).